Reading from the N-terminus, the 378-residue chain is Chaperone protein DnaJ (378 aa).

The J domain occupies 5–70 (DYYEVLGVAK…QKRAAYDQYG (66 aa)). Residues 138-216 (GYDTQIRVPS…CHGSGKVKET (79 aa)) form a CR-type zinc finger. Residues Cys-151, Cys-154, Cys-168, Cys-171, Cys-190, Cys-193, Cys-204, and Cys-207 each contribute to the Zn(2+) site. CXXCXGXG motif repeat units follow at residues 151 to 158 (CEVCHGSG), 168 to 175 (CPTCHGQG), 190 to 197 (CPKCHGTG), and 204 to 211 (CVHCHGSG).

The protein belongs to the DnaJ family. Homodimer. The cofactor is Zn(2+).

It localises to the cytoplasm. Its function is as follows. Participates actively in the response to hyperosmotic and heat shock by preventing the aggregation of stress-denatured proteins and by disaggregating proteins, also in an autonomous, DnaK-independent fashion. Unfolded proteins bind initially to DnaJ; upon interaction with the DnaJ-bound protein, DnaK hydrolyzes its bound ATP, resulting in the formation of a stable complex. GrpE releases ADP from DnaK; ATP binding to DnaK triggers the release of the substrate protein, thus completing the reaction cycle. Several rounds of ATP-dependent interactions between DnaJ, DnaK and GrpE are required for fully efficient folding. Also involved, together with DnaK and GrpE, in the DNA replication of plasmids through activation of initiation proteins. The chain is Chaperone protein DnaJ from Burkholderia ambifaria (strain MC40-6).